Reading from the N-terminus, the 141-residue chain is Protein C19orf12 homolog (141 aa).

The chain crosses the membrane as a helical span at residues 37–57 (GLAFAGGLIGGPLGIAVGGAV).

The protein belongs to the C19orf12 family.

Its subcellular location is the mitochondrion. It localises to the mitochondrion membrane. The protein localises to the endoplasmic reticulum. It is found in the cytoplasm. The protein resides in the cytosol. This Danio rerio (Zebrafish) protein is Protein C19orf12 homolog.